Reading from the N-terminus, the 963-residue chain is Bifunctional glutamine synthetase adenylyltransferase/adenylyl-removing enzyme (963 aa).

The adenylyl removase stretch occupies residues 1-453; that stretch reads MLTTLIPLSQ…IFNEIIGEEE (453 aa). Residues 461–963 form an adenylyl transferase region; that stretch reads VNEKLAEWKD…VREMWQRLLA (503 aa).

It belongs to the GlnE family. Requires Mg(2+) as cofactor.

It carries out the reaction [glutamine synthetase]-O(4)-(5'-adenylyl)-L-tyrosine + phosphate = [glutamine synthetase]-L-tyrosine + ADP. It catalyses the reaction [glutamine synthetase]-L-tyrosine + ATP = [glutamine synthetase]-O(4)-(5'-adenylyl)-L-tyrosine + diphosphate. Its function is as follows. Involved in the regulation of glutamine synthetase GlnA, a key enzyme in the process to assimilate ammonia. When cellular nitrogen levels are high, the C-terminal adenylyl transferase (AT) inactivates GlnA by covalent transfer of an adenylyl group from ATP to specific tyrosine residue of GlnA, thus reducing its activity. Conversely, when nitrogen levels are low, the N-terminal adenylyl removase (AR) activates GlnA by removing the adenylyl group by phosphorolysis, increasing its activity. The regulatory region of GlnE binds the signal transduction protein PII (GlnB) which indicates the nitrogen status of the cell. The sequence is that of Bifunctional glutamine synthetase adenylyltransferase/adenylyl-removing enzyme from Mannheimia haemolytica (Pasteurella haemolytica).